The sequence spans 183 residues: Oligoribonuclease (183 aa).

Positions 10 to 173 (LIWIDLEMTG…ADIRESIAEL (164 aa)) constitute an Exonuclease domain. Tyr131 is a catalytic residue.

It belongs to the oligoribonuclease family.

It is found in the cytoplasm. Functionally, 3'-to-5' exoribonuclease specific for small oligoribonucleotides. The chain is Oligoribonuclease from Idiomarina loihiensis (strain ATCC BAA-735 / DSM 15497 / L2-TR).